We begin with the raw amino-acid sequence, 132 residues long: Small ribosomal subunit protein eS6 (132 aa).

The protein belongs to the eukaryotic ribosomal protein eS6 family.

This is Small ribosomal subunit protein eS6 from Methanoculleus marisnigri (strain ATCC 35101 / DSM 1498 / JR1).